A 765-amino-acid polypeptide reads, in one-letter code: Palmitoyltransferase ZDHHC8 (765 aa).

The Cytoplasmic segment spans residues M1–K13. The helical transmembrane segment at Y14–F34 threads the bilayer. The Lumenal segment spans residues T35–G52. Residues I53 to F73 form a helical membrane-spanning segment. Residues P74–Y148 are Cytoplasmic-facing. The DHHC domain occupies K104–L154. The S-palmitoyl cysteine intermediate role is filled by C134. A helical transmembrane segment spans residues F149 to V169. Topologically, residues Y170–M190 are lumenal. The chain crosses the membrane as a helical span at residues C191–V211. The Cytoplasmic portion of the chain corresponds to T212–V765. Residues L290–E386 are disordered. Basic and acidic residues predominate over residues G301–L311. Over residues P333–S348 the composition is skewed to polar residues. S337 is subject to Phosphoserine. R441 bears the Omega-N-methylarginine mark. The tract at residues A447–D542 is disordered. A phosphoserine mark is found at S606 and S627. The segment at S630–H747 is disordered. Residues P639–A655 are compositionally biased toward polar residues. Over residues Q671–P680 the composition is skewed to pro residues. Phosphoserine occurs at positions 675, 682, 725, and 743.

It belongs to the DHHC palmitoyltransferase family. ERF2/ZDHHC9 subfamily.

It is found in the golgi apparatus membrane. It localises to the mitochondrion membrane. The enzyme catalyses L-cysteinyl-[protein] + hexadecanoyl-CoA = S-hexadecanoyl-L-cysteinyl-[protein] + CoA. Functionally, palmitoyltransferase that catalyzes the addition of palmitate onto various protein substrates and therefore functions in several unrelated biological processes. Through the palmitoylation of ABCA1 regulates the localization of the transporter to the plasma membrane and thereby regulates its function in cholesterol and phospholipid efflux. Could also pamitoylate the D(2) dopamine receptor DRD2 and regulate its stability and localization to the plasma membrane. Could also play a role in glutamatergic transmission. The sequence is that of Palmitoyltransferase ZDHHC8 from Canis lupus familiaris (Dog).